The chain runs to 122 residues: S-adenosylmethionine decarboxylase proenzyme (122 aa).

Ser63 functions as the Schiff-base intermediate with substrate; via pyruvic acid in the catalytic mechanism. Ser63 is subject to Pyruvic acid (Ser); by autocatalysis. The Proton acceptor; for processing activity role is filled by His68. Cys83 functions as the Proton donor; for catalytic activity in the catalytic mechanism.

The protein belongs to the prokaryotic AdoMetDC family. Type 1 subfamily. As to quaternary structure, heterotetramer of two alpha and two beta chains arranged as a dimer of alpha/beta heterodimers. It depends on pyruvate as a cofactor. Post-translationally, is synthesized initially as an inactive proenzyme. Formation of the active enzyme involves a self-maturation process in which the active site pyruvoyl group is generated from an internal serine residue via an autocatalytic post-translational modification. Two non-identical subunits are generated from the proenzyme in this reaction, and the pyruvate is formed at the N-terminus of the alpha chain, which is derived from the carboxyl end of the proenzyme. The post-translation cleavage follows an unusual pathway, termed non-hydrolytic serinolysis, in which the side chain hydroxyl group of the serine supplies its oxygen atom to form the C-terminus of the beta chain, while the remainder of the serine residue undergoes an oxidative deamination to produce ammonia and the pyruvoyl group blocking the N-terminus of the alpha chain.

The catalysed reaction is S-adenosyl-L-methionine + H(+) = S-adenosyl 3-(methylsulfanyl)propylamine + CO2. Its pathway is amine and polyamine biosynthesis; S-adenosylmethioninamine biosynthesis; S-adenosylmethioninamine from S-adenosyl-L-methionine: step 1/1. Its function is as follows. Catalyzes the decarboxylation of S-adenosylmethionine to S-adenosylmethioninamine (dcAdoMet), the propylamine donor required for the synthesis of the polyamines spermine and spermidine from the diamine putrescine. This Methanococcus maripaludis (strain C5 / ATCC BAA-1333) protein is S-adenosylmethionine decarboxylase proenzyme.